Reading from the N-terminus, the 182-residue chain is Inner membrane-spanning protein YciB (182 aa).

The next 5 membrane-spanning stretches (helical) occupy residues 22 to 42 (IYIA…VTYA), 50 to 70 (MHLI…IFHD), 72 to 92 (AFIK…LAVS), 118 to 138 (VTWY…YVAF), and 148 to 168 (FKVF…VVYL).

Belongs to the YciB family.

It is found in the cell inner membrane. Plays a role in cell envelope biogenesis, maintenance of cell envelope integrity and membrane homeostasis. The sequence is that of Inner membrane-spanning protein YciB from Shewanella woodyi (strain ATCC 51908 / MS32).